The following is a 551-amino-acid chain: NAD(P)H-quinone oxidoreductase chain 4 (551 aa).

The next 14 helical transmembrane spans lie at 25 to 45 (FPWLSLSILFPIVGSLMVPFI), 56 to 76 (WFALGIALTTFLITVAAYLNG), 111 to 131 (LILLTSFITTLAVLAAWPVTF), 133 to 153 (PKLFFFLMLAMDGGQIAVFAV), 157 to 177 (LLFFLAWELELLPVYLLLAIW), 189 to 209 (FILYTAGSSLFILLAALAMGF), 233 to 253 (LLCYAGLLIAFGVKLPIVPLH), 264 to 284 (TAPVHMLLAGILLKMGGYALM), 298 to 318 (FAPLLVVLGVVNIIYAALTSF), 335 to 355 (MGFVLIGIGSFSALGTSGAML), 356 to 376 (QMISHGLIGASLFFLVGATYD), 397 to 417 (FALWTVCSLASLALPGMSGFV), 438 to 458 (IVIDGLAAVGVILTPIYLLSM), and 485 to 505 (VYIIGCLLVPIIGIGLYPRLM).

Belongs to the complex I subunit 4 family.

The protein localises to the cellular thylakoid membrane. The enzyme catalyses a plastoquinone + NADH + (n+1) H(+)(in) = a plastoquinol + NAD(+) + n H(+)(out). The catalysed reaction is a plastoquinone + NADPH + (n+1) H(+)(in) = a plastoquinol + NADP(+) + n H(+)(out). Functionally, NDH-1 shuttles electrons from NAD(P)H, via FMN and iron-sulfur (Fe-S) centers, to quinones in the respiratory chain. The immediate electron acceptor for the enzyme in this species is believed to be plastoquinone. Couples the redox reaction to proton translocation (for every two electrons transferred, four hydrogen ions are translocated across the cytoplasmic membrane), and thus conserves the redox energy in a proton gradient. The sequence is that of NAD(P)H-quinone oxidoreductase chain 4 from Synechococcus sp. (strain WH7803).